Reading from the N-terminus, the 81-residue chain is Penaeidin-3j (81 aa).

The signal sequence occupies residues 1-19 (MRLVVCLVFLASFALVCQG). Pyrrolidone carboxylic acid is present on glutamine 20. 3 cysteine pairs are disulfide-bonded: cysteine 50/cysteine 65, cysteine 54/cysteine 72, and cysteine 66/cysteine 73. At serine 80 the chain carries Serine amide.

This sequence belongs to the penaeidin family.

It localises to the cytoplasmic granule. Antibacterial and antifungal activity. Presents chitin-binding activity. This is Penaeidin-3j from Penaeus vannamei (Whiteleg shrimp).